The primary structure comprises 332 residues: Fructose-1,6-bisphosphatase class 1 (332 aa).

Mg(2+) is bound by residues glutamate 89, aspartate 110, leucine 112, and aspartate 113. Residues 113–116 (DGSS), asparagine 206, tyrosine 239, 257–259 (YLY), and lysine 269 each bind substrate. Glutamate 275 contributes to the Mg(2+) binding site.

The protein belongs to the FBPase class 1 family. Homotetramer. The cofactor is Mg(2+).

It is found in the cytoplasm. The enzyme catalyses beta-D-fructose 1,6-bisphosphate + H2O = beta-D-fructose 6-phosphate + phosphate. Its pathway is carbohydrate biosynthesis; gluconeogenesis. The sequence is that of Fructose-1,6-bisphosphatase class 1 from Erwinia tasmaniensis (strain DSM 17950 / CFBP 7177 / CIP 109463 / NCPPB 4357 / Et1/99).